Consider the following 1133-residue polypeptide: MLGLFNNSNSINGSGNNQDIDEIKREQMSNFDQFEDGLNNNNSNNNNNNNNSNNNNSNNNENINRKTGSTLLSSSTSQLNSSSGQISFSKDAVAPTKKRRYIVDKDHIFSWTPYCKAYWNKLINVYGVELEPPQLNVSAEKGFSFSEVDNSWIYYRRNHFQLGIGVSHCFQFLESSPPLISLNGSIYPVDDFYLCIRGVKNGPDVNINEEVEVELYQTNSKREKGEEKLPPPVLMTFSTNVTIPRLHFRKATANNARKHKLPNPQQEFFRLVLTVVARAQSRDFCITSMISDPLIVRTGHPTCNPVSNNPSTPGTPISNFDSSNNNNSSSSSSIINNNNNGISGYSPHTTVTTNSTTIIPTYGSGNNNNNNNNNNNNSSGNSSSTSPMVGPLGVVFPPSPINSLSNHNSPHLTPIQYNNNNNNSNNNSNNNNNNNNNNNNSNNNNNNSNNNNHQFQSNNRIFKGNLSNPFDLNYSQNSNNNNNNNNNNNNNNNNNNNNNNNNNNNNNNNNNNNNNNNNNNNNNNNNNNNIFSHNNNNNNNNNNNNNNNNNNNNNNNNNNNNNNNNNNNSQNIHFYNNNSNNNNNNNSSSSNNNNNNNNNNNNNNNKNNNNNGNNSQINEKHNLSSNSNSSGFTAELFSSIENTIRNNNFLTQKPHFPFDQTLHQLQFQAQNNQYDQINGKLDNIHNNSNNNSSNNNNSNNNSSNNNSNNNNNNNGSHTASVKRKLSNSYDQQNLEIESPQSYISSPTPYFVDNKQPQPQPQPQPQPQPQPQPQSQSQSQSQSQSQSQSQSQSQSQPIQQIVQQQLSSPTQFSQSEEVILSSPLQQQTIQSIQQQQPQQQVITNPLLQQPQQQQQNIISIGDMDKNIKWAQSPNGGLFHFGNVGVNSENPQEALSVNGNVSISGMMYQPSDKRVKENVKPVNSKDQLSNIMKLKIYDYQLTDEWVKSQNLTETKDRGVLAQDLNTPSNHIPNSVKHTGDRILGNGRVIKDFLVVNKDAIFLENVGATQELSKKVDNVCMELETLDKKKFEMLGHKMSELERTTIREIKKNQKRKKIFIGIGVFTLFVIFGLVAVSIVLGTRNTITKNITVYTTGSPGYLNGDCTDSESGSNSCYDSSSNSAIDTTTSTGSGSIK.

Disordered stretches follow at residues 33-83, 305-629, 679-723, and 736-817; these read QFED…NSSS, PVSN…NSNS, GKLD…SVKR, and IESP…SEEV. Residues 39-83 show a composition bias toward low complexity; that stretch reads NNNNSNNNNNNNNSNNNNSNNNENINRKTGSTLLSSSTSQLNSSS. The segment at residues 40-308 is a DNA-binding region (NDT80); the sequence is NNNSNNNNNN…GHPTCNPVSN (269 aa). Residues 305–316 show a composition bias toward polar residues; it reads PVSNNPSTPGTP. Residues 317 to 384 are compositionally biased toward low complexity; sequence ISNFDSSNNN…NNNSSGNSSS (68 aa). Residues 401-417 are compositionally biased toward polar residues; that stretch reads INSLSNHNSPHLTPIQY. Residues 418–452 show a composition bias toward low complexity; that stretch reads NNNNNNSNNNSNNNNNNNNNNNNSNNNNNNSNNNN. Residues 453 to 470 show a composition bias toward polar residues; it reads HQFQSNNRIFKGNLSNPF. 2 stretches are compositionally biased toward low complexity: residues 473 to 615 and 686 to 714; these read NYSQ…GNNS and NNSN…NNNN. The segment covering 736 to 747 has biased composition (polar residues); the sequence is IESPQSYISSPT. The segment covering 757-771 has biased composition (pro residues); sequence QPQPQPQPQPQPQPQ. The segment covering 772-808 has biased composition (low complexity); that stretch reads PQSQSQSQSQSQSQSQSQSQSQSQPIQQIVQQQLSSP. Residues 909–1020 form the Peptidase S74 domain; sequence SDKRVKENVK…KKVDNVCMEL (112 aa). Residues 1055–1075 traverse the membrane as a helical segment; sequence IFIGIGVFTLFVIFGLVAVSI. The segment at 1107–1133 is disordered; the sequence is SGSNSCYDSSSNSAIDTTTSTGSGSIK.

The protein localises to the membrane. This is an uncharacterized protein from Dictyostelium discoideum (Social amoeba).